Consider the following 77-residue polypeptide: Translation initiation factor IF-1, chloroplastic (77 aa).

Residues 1-72 form the S1-like domain; the sequence is MRKQNLIEME…TKGRITYRLR (72 aa).

The protein belongs to the IF-1 family. Component of the 30S ribosomal translation pre-initiation complex which assembles on the 30S ribosome in the order IF-2 and IF-3, IF-1 and N-formylmethionyl-tRNA(fMet); mRNA recruitment can occur at any time during PIC assembly.

Its subcellular location is the plastid. It localises to the chloroplast. Its function is as follows. One of the essential components for the initiation of protein synthesis. Stabilizes the binding of IF-2 and IF-3 on the 30S subunit to which N-formylmethionyl-tRNA(fMet) subsequently binds. Helps modulate mRNA selection, yielding the 30S pre-initiation complex (PIC). Upon addition of the 50S ribosomal subunit IF-1, IF-2 and IF-3 are released leaving the mature 70S translation initiation complex. The protein is Translation initiation factor IF-1, chloroplastic of Staurastrum punctulatum (Green alga).